Consider the following 207-residue polypeptide: Ras-related protein Rab-7a (207 aa).

The residue at position 2 (Thr2) is an N-acetylthreonine. The GTP site is built by Ser17, Gly18, Val19, Gly20, Lys21, Thr22, Ser23, Ser34, Asn35, Tyr37, and Thr40. Thr22 serves as a coordination point for Mg(2+). Positions 28–41 match the Switch 1 motif; that stretch reads YVNKKFSNQYKATI. Positions 40 and 63 each coordinate Mg(2+). Gly66 provides a ligand contact to GTP. The Switch 2 motif lies at 67–82; sequence QERFQSLGVAFYRGAD. Ser72 carries the post-translational modification Phosphoserine. Asn125, Lys126, Asp128, Ala156, and Lys157 together coordinate GTP. Glycyl lysine isopeptide (Lys-Gly) (interchain with G-Cter in ubiquitin) cross-links involve residues Lys191 and Lys194. S-geranylgeranyl cysteine attachment occurs at residues Cys205 and Cys207. The residue at position 207 (Cys207) is a Cysteine methyl ester.

The protein belongs to the small GTPase superfamily. Rab family. As to quaternary structure, interacts with NTRK1/TRKA, RILP, PSMA7, RNF115 and FYCO1. Interacts with the PIK3C3/VPS34-PIK3R4 complex. The GTP-bound form interacts with OSBPL1A and RAC1. Interacts with CLN3. Interacts with CHM, the substrate-binding subunit of the Rab geranylgeranyltransferase complex. Interacts with C9orf72. Does not interact with HPS4 and the BLOC-3 complex (heterodimer of HPS1 and HPS4). Interacts with CLN5. Interacts with PLEKHM1 (via N- and C-terminus). Interacts with PRPH; the interaction is direct. Interacts with VPS13A. The GDP-bound form interacts with RIMOC1. Interacts with the MON1A-CCZ1B complex and this interaction is enhanced in the presence of RIMOC1. Interacts with VPS39 and VPS41. Forms a ternary complex with LAMP2 and RUFY4; the interaction with LAMP2 is mediated by RUFY4 (via RUN and coiled coil domains). It depends on Mg(2+) as a cofactor. Deubiquitination at Lys-191 and Lys-194 by USP32. In terms of processing, phosphorylated at Ser-72 by LRRK1; phosphorylation is dependent on protein kinase C (PKC) activation of LRRK1. Post-translationally, prenylated. Prenylation is required for association with cellular membranes. In terms of tissue distribution, widely expressed. High expression in liver, heart and kidney. Found in sensory and motor neurons.

The protein localises to the cytoplasmic vesicle. It localises to the phagosome membrane. The protein resides in the late endosome membrane. It is found in the lysosome membrane. Its subcellular location is the melanosome membrane. The protein localises to the autophagosome membrane. It localises to the lipid droplet. The protein resides in the endosome membrane. It is found in the mitochondrion membrane. The enzyme catalyses GTP + H2O = GDP + phosphate + H(+). Its activity is regulated as follows. Regulated by guanine nucleotide exchange factors (GEFs) which promote the exchange of bound GDP for free GTP. Regulated by GTPase activating proteins (GAPs) which increase the GTP hydrolysis activity. Inhibited by GDP dissociation inhibitors (GDIs). Functionally, the small GTPases Rab are key regulators of intracellular membrane trafficking, from the formation of transport vesicles to their fusion with membranes. Rabs cycle between an inactive GDP-bound form and an active GTP-bound form that is able to recruit to membranes different sets of downstream effectors directly responsible for vesicle formation, movement, tethering and fusion. In its active state, RAB7A binds to a variety of effector proteins playing a key role in the regulation of endo-lysosomal trafficking. Governs early-to-late endosomal maturation, microtubule minus-end as well as plus-end directed endosomal migration and positioning, and endosome-lysosome transport through different protein-protein interaction cascades. Also plays a central role in growth-factor-mediated cell signaling, nutrient-transporter-mediated nutrient uptake, neurotrophin transport in the axons of neurons and lipid metabolism. Also involved in regulation of some specialized endosomal membrane trafficking, such as maturation of melanosomes, pathogen-induced phagosomes (or vacuoles) and autophagosomes. Plays a role in the maturation and acidification of phagosomes that engulf pathogens, such as S.aureus and Mycobacteria. Plays a role in the fusion of phagosomes with lysosomes. In concert with RAC1, plays a role in regulating the formation of RBs (ruffled borders) in osteoclasts. Controls the endosomal trafficking and neurite outgrowth signaling of NTRK1/TRKA. Regulates the endocytic trafficking of the EGF-EGFR complex by regulating its lysosomal degradation. Involved in the ADRB2-stimulated lipolysis through lipophagy, a cytosolic lipase-independent autophagic pathway. Required for the exosomal release of SDCBP, CD63 and syndecan. Required for vesicular trafficking and cell surface expression of ACE2. May play a role in PRPH neuronal intermediate filament assembly. The polypeptide is Ras-related protein Rab-7a (Mus musculus (Mouse)).